Consider the following 601-residue polypeptide: DNA replication licensing factor MCM3 (601 aa).

One can recognise an MCM domain in the interval 180–386 (PINLLSKSIA…LDRRLSQHVL (207 aa)). Position 229–236 (229–236 (GDPSTAKS)) interacts with ATP. Positions 361–364 (SRFD) match the Arginine finger motif.

This sequence belongs to the MCM family. In terms of assembly, component of the MCM2-7 complex.

Its subcellular location is the nucleus. The protein resides in the chromosome. It is found in the nucleoplasm. The catalysed reaction is ATP + H2O = ADP + phosphate + H(+). Its function is as follows. Acts as a component of the MCM2-7 complex (MCM complex) which is the replicative helicase essential for DNA replication initiation and elongation in eukaryotic cells. Required for DNA replication and cell proliferation. The active ATPase sites in the MCM2-7 ring are formed through the interaction surfaces of two neighboring subunits such that a critical structure of a conserved arginine finger motif is provided in trans relative to the ATP-binding site of the Walker A box of the adjacent subunit. In Entamoeba histolytica (strain ATCC 30459 / HM-1:IMSS / ABRM), this protein is DNA replication licensing factor MCM3.